A 677-amino-acid polypeptide reads, in one-letter code: Nuclear fusion protein FUS2 (677 aa).

The residue at position 20 (T20) is a Phosphothreonine. A phosphoserine mark is found at S67, S72, and S84. At T88 the chain carries Phosphothreonine. Residues S100 and S106 each carry the phosphoserine modification. Residues 112 to 326 (KFYKIVQEFY…KYSLFSNKLE (215 aa)) form the DH domain.

Its subcellular location is the cell tip. Its function is as follows. Promotes cell fusion during zygote formation. In Saccharomyces cerevisiae (strain ATCC 204508 / S288c) (Baker's yeast), this protein is Nuclear fusion protein FUS2 (FUS2).